We begin with the raw amino-acid sequence, 345 residues long: uncharacterized protein (345 aa).

The protein localises to the plastid. The protein resides in the chloroplast. This is an uncharacterized protein from Chlamydomonas moewusii (Chlamydomonas eugametos).